Reading from the N-terminus, the 371-residue chain is Probable dual-specificity RNA methyltransferase RlmN (371 aa).

The Proton acceptor role is filled by Glu-114. Residues 120-346 (DGPRRSICVS…ESAGVNVNFR (227 aa)) form the Radical SAM core domain. Cys-127 and Cys-357 are joined by a disulfide. Residues Cys-134, Cys-138, and Cys-141 each coordinate [4Fe-4S] cluster. S-adenosyl-L-methionine-binding positions include 183-184 (GE), Ser-215, 238-240 (SLH), and Asn-314. The active-site S-methylcysteine intermediate is Cys-357.

The protein belongs to the radical SAM superfamily. RlmN family. Requires [4Fe-4S] cluster as cofactor.

Its subcellular location is the cytoplasm. It catalyses the reaction adenosine(2503) in 23S rRNA + 2 reduced [2Fe-2S]-[ferredoxin] + 2 S-adenosyl-L-methionine = 2-methyladenosine(2503) in 23S rRNA + 5'-deoxyadenosine + L-methionine + 2 oxidized [2Fe-2S]-[ferredoxin] + S-adenosyl-L-homocysteine. The enzyme catalyses adenosine(37) in tRNA + 2 reduced [2Fe-2S]-[ferredoxin] + 2 S-adenosyl-L-methionine = 2-methyladenosine(37) in tRNA + 5'-deoxyadenosine + L-methionine + 2 oxidized [2Fe-2S]-[ferredoxin] + S-adenosyl-L-homocysteine. Functionally, specifically methylates position 2 of adenine 2503 in 23S rRNA and position 2 of adenine 37 in tRNAs. The protein is Probable dual-specificity RNA methyltransferase RlmN of Rhodopirellula baltica (strain DSM 10527 / NCIMB 13988 / SH1).